Reading from the N-terminus, the 355-residue chain is Membrane cofactor protein (355 aa).

An N-terminal signal peptide occupies residues 1-42 (MTAAPLTPDPTHPRRRRKSYTFFSLGIYAEALLFLLSSLSDA). 4 Sushi domains span residues 43–104 (CEPP…GCIK), 105–168 (VQCT…SCKK), 169–234 (VYCL…ECKV), and 235–294 (VKCP…QCLK). Over 43-326 (CEPPPPFEAM…GIFGQEFDAW (284 aa)) the chain is Extracellular. Intrachain disulfides connect cysteine 107-cysteine 149, cysteine 135-cysteine 166, cysteine 171-cysteine 219, cysteine 200-cysteine 232, cysteine 237-cysteine 279, and cysteine 265-cysteine 292. An N-linked (GlcNAc...) asparagine glycan is attached at asparagine 179. An O-linked (GalNAc...) threonine glycan is attached at threonine 301. Residues 327-347 (IIALIVVTSVVGVIVICLIIL) traverse the membrane as a helical segment. Topologically, residues 348 to 355 (RCSEYRKK) are cytoplasmic.

Interacts with C3b. Interacts with C4b. Interacts with moesin/MSN. In terms of processing, O-glycosylated. Post-translationally, N-glycosylated. Specifically expressed in testis. Within testis, present only in elongated spermatids and spermatozoa (at protein level).

The protein localises to the cytoplasmic vesicle. It localises to the secretory vesicle. The protein resides in the acrosome inner membrane. In terms of biological role, may be involved in the fusion of the spermatozoa with the oocyte during fertilization. The sequence is that of Membrane cofactor protein (Cd46) from Rattus norvegicus (Rat).